Here is a 593-residue protein sequence, read N- to C-terminus: Salivary alpha-glucosidase (593 aa).

A signal peptide spans 1–19 (MPPLGVLLLLVALGHSTQG). Ca(2+) contacts are provided by Asp49, Asp51, Asp53, Ile55, Asp57, and Asn130. Residues Asn130 and Asn163 are each glycosylated (N-linked (GlcNAc...) asparagine). Positions 201, 235, 236, and 238 each coordinate Ca(2+). N-linked (GlcNAc...) asparagine glycosylation is found at Asn295, Asn310, Asn338, Asn414, Asn445, and Asn453. Asn338 contributes to the N-acetyl-beta-D-glucosamine binding site.

This sequence belongs to the glycosyl hydrolase 13 family. Saliva (at protein level). Proximal lateral lobes of the salivary gland (at protein level).

It is found in the secreted. It carries out the reaction Hydrolysis of terminal, non-reducing (1-&gt;4)-linked alpha-D-glucose residues with release of alpha-D-glucose.. Functions as a glucosidase that shows high activity toward sucrose, a major component of nectar. Assists the mosquito in its sugar-feeding capabilities. This Anopheles gambiae (African malaria mosquito) protein is Salivary alpha-glucosidase.